A 253-amino-acid chain; its full sequence is Isoprenyl transferase (253 aa).

Residue aspartate 32 is part of the active site. Residue aspartate 32 participates in Mg(2+) binding. Substrate is bound by residues glycine 33–arginine 36, tryptophan 37, arginine 45, histidine 49, and serine 77–glutamate 79. The active-site Proton acceptor is the asparagine 80. Residues tryptophan 81, arginine 83, arginine 200, and arginine 206 to serine 208 contribute to the substrate site. Glutamate 219 lines the Mg(2+) pocket.

The protein belongs to the UPP synthase family. Homodimer. It depends on Mg(2+) as a cofactor.

Functionally, catalyzes the condensation of isopentenyl diphosphate (IPP) with allylic pyrophosphates generating different type of terpenoids. The protein is Isoprenyl transferase of Clostridium perfringens (strain 13 / Type A).